Consider the following 89-residue polypeptide: MRAVLTVIGKDNVGIVAGVSNKLAELNINIVDVSQTIMDGYFTMMMMCDISQITKEFDEVKAELAGKGEDLQVKIHIQREEIFNAMHKL.

An ACT domain is found at 4–78 (VLTVIGKDNV…EDLQVKIHIQ (75 aa)).

It belongs to the UPF0237 family.

The protein is UPF0237 protein LMOf2365_0562 of Listeria monocytogenes serotype 4b (strain F2365).